Reading from the N-terminus, the 375-residue chain is Alcohol dehydrogenase 1 (375 aa).

Position 1 is an N-acetylserine (Ser1). Zn(2+) contacts are provided by Cys46, His67, Cys97, Cys100, Cys103, Cys111, and Cys174. NAD(+) contacts are provided by residues Gly199–Gly204, Asp223, Lys228, Val293–Val295, and Arg370.

It belongs to the zinc-containing alcohol dehydrogenase family. Class-I subfamily. As to quaternary structure, homodimer. Zn(2+) is required as a cofactor.

Its subcellular location is the cytoplasm. It carries out the reaction a primary alcohol + NAD(+) = an aldehyde + NADH + H(+). It catalyses the reaction a secondary alcohol + NAD(+) = a ketone + NADH + H(+). The sequence is that of Alcohol dehydrogenase 1 from Naja naja (Indian cobra).